The primary structure comprises 199 residues: NAD(P)H dehydrogenase (quinone) (199 aa).

Positions 4-190 (VLVLYYSAYG…AGARYQGRMI (187 aa)) constitute a Flavodoxin-like domain. Residues 10–15 (SAYGHI) and 78–80 (TRF) contribute to the FMN site. Tyr12 lines the NAD(+) pocket. A substrate-binding site is contributed by Trp98. FMN is bound by residues 113-119 (SSATQHG) and His134.

This sequence belongs to the WrbA family. It depends on FMN as a cofactor.

The enzyme catalyses a quinone + NADH + H(+) = a quinol + NAD(+). It catalyses the reaction a quinone + NADPH + H(+) = a quinol + NADP(+). This Nitrobacter winogradskyi (strain ATCC 25391 / DSM 10237 / CIP 104748 / NCIMB 11846 / Nb-255) protein is NAD(P)H dehydrogenase (quinone).